Consider the following 474-residue polypeptide: 6-phospho-beta-galactosidase (474 aa).

The D-galactose 6-phosphate site is built by Q19, H116, N159, E160, and N297. E160 functions as the Proton donor in the catalytic mechanism. E375 functions as the Nucleophile in the catalytic mechanism. The D-galactose 6-phosphate site is built by S433, W434, K440, and Y442.

The protein belongs to the glycosyl hydrolase 1 family.

It catalyses the reaction a 6-phospho-beta-D-galactoside + H2O = D-galactose 6-phosphate + an alcohol. It functions in the pathway carbohydrate metabolism; lactose degradation; D-galactose 6-phosphate and beta-D-glucose from lactose 6-phosphate: step 1/1. The protein is 6-phospho-beta-galactosidase of Lacticaseibacillus casei (Lactobacillus casei).